We begin with the raw amino-acid sequence, 207 residues long: Casparian strip membrane protein 3 (207 aa).

The Cytoplasmic segment spans residues Met1–Gly45. A helical membrane pass occupies residues Val46–Ala66. At Thr67 to Thr95 the chain is on the extracellular side. A helical transmembrane segment spans residues Phe96–Ile116. At Val117 to Lys128 the chain is on the cytoplasmic side. The chain crosses the membrane as a helical span at residues Leu129–Ala149. The Extracellular segment spans residues Ala150–Gly181. The chain crosses the membrane as a helical span at residues Ala182–Val202. Residues Ala203 to His207 are Cytoplasmic-facing.

It belongs to the Casparian strip membrane proteins (CASP) family. In terms of assembly, homodimer and heterodimers.

Its subcellular location is the cell membrane. In terms of biological role, regulates membrane-cell wall junctions and localized cell wall deposition. Required for establishment of the Casparian strip membrane domain (CSD) and the subsequent formation of Casparian strips, a cell wall modification of the root endodermis that determines an apoplastic barrier between the intraorganismal apoplasm and the extraorganismal apoplasm and prevents lateral diffusion. This chain is Casparian strip membrane protein 3, found in Erythranthe guttata (Yellow monkey flower).